A 546-amino-acid polypeptide reads, in one-letter code: Chaperonin GroEL 2 (546 aa).

ATP contacts are provided by residues Thr-30–Pro-33, Lys-51, Asp-87–Thr-91, Gly-415, Asn-479–Ala-481, and Asp-495.

It belongs to the chaperonin (HSP60) family. In terms of assembly, forms a cylinder of 14 subunits composed of two heptameric rings stacked back-to-back. Interacts with the co-chaperonin GroES.

The protein localises to the cytoplasm. The catalysed reaction is ATP + H2O + a folded polypeptide = ADP + phosphate + an unfolded polypeptide.. Together with its co-chaperonin GroES, plays an essential role in assisting protein folding. The GroEL-GroES system forms a nano-cage that allows encapsulation of the non-native substrate proteins and provides a physical environment optimized to promote and accelerate protein folding. This Chromobacterium violaceum (strain ATCC 12472 / DSM 30191 / JCM 1249 / CCUG 213 / NBRC 12614 / NCIMB 9131 / NCTC 9757 / MK) protein is Chaperonin GroEL 2.